An 81-amino-acid chain; its full sequence is Delta-conotoxin-like Ac6.3 (81 aa).

The signal sequence occupies residues 1-22; that stretch reads MKLTCVMIVAVLFLTAWTFVTA. Residues 23–51 constitute a propeptide that is removed on maturation; it reads DDSRNGLENLSPKARHEMKNPEASKSNKR. 3 disulfide bridges follow: C54–C69, C61–C73, and C68–C78.

This sequence belongs to the conotoxin O1 superfamily. As to expression, expressed by the venom duct.

It is found in the secreted. In terms of biological role, delta-conotoxins bind to site 6 of voltage-gated sodium channels (Nav) and inhibit the inactivation process. The protein is Delta-conotoxin-like Ac6.3 of Conus achatinus (Little frog cone).